The sequence spans 150 residues: Macrodomain Ter protein (150 aa).

This sequence belongs to the MatP family. Homodimer.

The protein localises to the cytoplasm. In terms of biological role, required for spatial organization of the terminus region of the chromosome (Ter macrodomain) during the cell cycle. Prevents early segregation of duplicated Ter macrodomains during cell division. Binds specifically to matS, which is a 13 bp signature motif repeated within the Ter macrodomain. This Escherichia coli O8 (strain IAI1) protein is Macrodomain Ter protein.